Consider the following 344-residue polypeptide: DNA polymerase III subunit delta (344 aa).

The protein belongs to the DNA polymerase HolA subunit family. As to quaternary structure, DNA polymerase III contains a core (composed of alpha, epsilon and theta chains) that associates with a tau subunit. This core dimerizes to form the POLIII' complex. PolIII' associates with the gamma complex (composed of gamma, delta, delta', psi and chi chains) and with the beta chain to form the complete DNA polymerase III complex.

The catalysed reaction is DNA(n) + a 2'-deoxyribonucleoside 5'-triphosphate = DNA(n+1) + diphosphate. Functionally, DNA polymerase III is a complex, multichain enzyme responsible for most of the replicative synthesis in bacteria. This DNA polymerase also exhibits 3' to 5' exonuclease activity. The delta subunit seems to interact with the gamma subunit to transfer the beta subunit on the DNA. This is DNA polymerase III subunit delta (holA) from Haemophilus influenzae (strain ATCC 51907 / DSM 11121 / KW20 / Rd).